The primary structure comprises 162 residues: Ribonuclease (162 aa).

Positions 1-29 (MKKISSVFTMFALIAAILFSGFIPQQAYA) are cleaved as a signal peptide. Residues 30 to 53 (ETTLTPTATNKTASIQLTSDVHTL) constitute a propeptide that is removed on maturation. Catalysis depends on E125, which acts as the Proton acceptor. The active-site Proton donor is the H154.

The protein belongs to the ribonuclease N1/T1 family.

It localises to the secreted. In terms of biological role, this is a purine-specific ribonuclease. The protein is Ribonuclease of Bacillus pumilus (Bacillus mesentericus).